The following is a 393-amino-acid chain: Phosphoglycerate kinase (393 aa).

Substrate is bound by residues 21–23 (DFN), R36, 59–62 (HLGR), R118, and R151. Residues K201, E323, and 349 to 352 (GGDS) contribute to the ATP site.

This sequence belongs to the phosphoglycerate kinase family. As to quaternary structure, monomer.

Its subcellular location is the cytoplasm. It catalyses the reaction (2R)-3-phosphoglycerate + ATP = (2R)-3-phospho-glyceroyl phosphate + ADP. The protein operates within carbohydrate degradation; glycolysis; pyruvate from D-glyceraldehyde 3-phosphate: step 2/5. This chain is Phosphoglycerate kinase, found in Moorella thermoacetica (strain ATCC 39073 / JCM 9320).